A 535-amino-acid polypeptide reads, in one-letter code: PAC-1 interacting and coiled-coil domain-containing protein 1 (535 aa).

The segment at 1–67 is disordered; that stretch reads MIITTPRRAN…KQTPPRSPVI (67 aa). Residues 36–57 show a composition bias toward low complexity; the sequence is SSTTPSSIGSSSSSSSSYASST. Coiled-coil stretches lie at residues 109 to 172 and 198 to 242; these read KLQY…RDLS and SLMK…RQSL. Disordered regions lie at residues 254–277 and 503–535; these read NESE…NDEE and TCRP…HTHN. The segment covering 503–525 has biased composition (polar residues); that stretch reads TCRPTTTLISSTQPAQRSVSVEK. Over residues 526–535 the composition is skewed to low complexity; the sequence is NNNNNVHTHN.

This sequence belongs to the CCDC85 family. Interacts with pac-1 and jac-1.

It localises to the cell junction. The protein localises to the adherens junction. Functionally, linker protein which helps to recruit the Rho GTPase-activating protein, pac-1, to adherens junctions. The chain is PAC-1 interacting and coiled-coil domain-containing protein 1 from Caenorhabditis elegans.